A 368-amino-acid polypeptide reads, in one-letter code: Endoglucanase (368 aa).

Positions 1-21 are cleaved as a signal peptide; sequence MNVLRSGLVTMLLLAAFSVQA. The active-site Proton donor is the Glu55. Asp116 functions as the Nucleophile in the catalytic mechanism.

The protein belongs to the glycosyl hydrolase 8 (cellulase D) family.

It localises to the secreted. It catalyses the reaction Endohydrolysis of (1-&gt;4)-beta-D-glucosidic linkages in cellulose, lichenin and cereal beta-D-glucans.. It participates in glycan metabolism; bacterial cellulose biosynthesis. In terms of biological role, hydrolyzes carboxymethylcellulose. This Escherichia coli O157:H7 protein is Endoglucanase (bcsZ).